The chain runs to 1463 residues: Secretory phospholipase A2 receptor (1463 aa).

The signal sequence occupies residues 1–20 (MPLLSLSLLLLLLQVPAGSA). Topologically, residues 21 to 1392 (ETAAWAVTPE…IHTVKKHPGK (1372 aa)) are extracellular. A Ricin B-type lectin domain is found at 38 to 115 (KGIFIIQSEN…CDSTHVSLKW (78 aa)). The N-linked (GlcNAc...) asparagine glycan is linked to Asn-93. The 49-residue stretch at 173–221 (AHGTPCMFPFQYNQQWHHECTREGREDNLLWCATTSRYERDEKWGFCPD) folds into the Fibronectin type-II domain. Intrachain disulfides connect Cys-178-Cys-204, Cys-192-Cys-219, Cys-260-Cys-354, Cys-330-Cys-346, Cys-406-Cys-501, Cys-478-Cys-493, Cys-617-Cys-634, Cys-699-Cys-796, Cys-774-Cys-788, Cys-840-Cys-938, Cys-915-Cys-930, Cys-992-Cys-1096, Cys-1068-Cys-1088, Cys-1209-Cys-1223, Cys-1280-Cys-1377, and Cys-1354-Cys-1369. 8 C-type lectin domains span residues 229 to 353 (CDAV…LPYV), 357 to 500 (YLNP…LFYL), 504 to 641 (TGLV…KAMS), 646 to 795 (PVEN…REWI), 799 to 937 (PRDV…MPSI), 941 to 1095 (KKVW…YGFV), 1099 to 1230 (MQDA…LQGA), and 1235 to 1376 (PTET…KGFI). Asn-454 carries N-linked (GlcNAc...) asparagine glycosylation. Residue Asn-1057 is glycosylated (N-linked (GlcNAc...) asparagine). The chain crosses the membrane as a helical span at residues 1393–1421 (GPSHSVIPLTVALTLLVILAISTLSFCMY). Residues 1422–1463 (KHSHIIFGRLAQFRNPYYPSANFSTVHLEENILISDLEKNDQ) lie on the Cytoplasmic side of the membrane. Positions 1436–1442 (NPYYPSA) match the Endocytosis signal motif.

Interacts with sPLA2-IB/PLA2G1B; this interaction mediates intracellular signaling as well as clearance of extracellular sPLA2-IB/PLA2G1B via endocytotic pathway. Interacts with sPLA2-X/PLA2G10; this interaction mediates sPLA2-X/PLA2G10 clearance and inactivation. The secretory phospholipase A2 receptor form may be produced by the action of metalloproteinases. It contains all extracellular domains and only lacks transmembrane and cytosolic regions. It is however unclear whether this form is produced by proteolytic cleavage as suggested by some experiments, or by alternative splicing.

The protein resides in the cell membrane. The protein localises to the secreted. In terms of biological role, receptor for secretory phospholipase A2 (sPLA2). Also able to bind to snake PA2-like toxins. Although its precise function remains unclear, binding of sPLA2 to its receptor participates in both positive and negative regulation of sPLA2 functions as well as clearance of sPLA2. Binding of sPLA2-IB/PLA2G1B induces various effects depending on the cell type, such as activation of the mitogen-activated protein kinase (MAPK) cascade to induce cell proliferation, the production of lipid mediators, selective release of arachidonic acid in bone marrow-derived mast cells. In neutrophils, binding of sPLA2-IB/PLA2G1B can activate p38 MAPK to stimulate elastase release and cell adhesion. May be involved in responses in pro-inflammatory cytokine productions during endotoxic shock. Also has endocytic properties and rapidly internalizes sPLA2 ligands, which is particularly important for the clearance of extracellular sPLA2s to protect their potent enzymatic activities. The soluble secretory phospholipase A2 receptor form is circulating and acts as a negative regulator of sPLA2 functions by blocking the biological functions of sPLA2-IB/PLA2G1B and sPLA2-X/PLA2G10. This chain is Secretory phospholipase A2 receptor (PLA2R1), found in Bos taurus (Bovine).